Consider the following 478-residue polypeptide: ATP synthase subunit beta (478 aa).

An ATP-binding site is contributed by Gly151–Thr158.

Belongs to the ATPase alpha/beta chains family. F-type ATPases have 2 components, CF(1) - the catalytic core - and CF(0) - the membrane proton channel. CF(1) has five subunits: alpha(3), beta(3), gamma(1), delta(1), epsilon(1). CF(0) has three main subunits: a(1), b(2) and c(9-12). The alpha and beta chains form an alternating ring which encloses part of the gamma chain. CF(1) is attached to CF(0) by a central stalk formed by the gamma and epsilon chains, while a peripheral stalk is formed by the delta and b chains.

It is found in the cell inner membrane. The enzyme catalyses ATP + H2O + 4 H(+)(in) = ADP + phosphate + 5 H(+)(out). Its function is as follows. Produces ATP from ADP in the presence of a proton gradient across the membrane. The catalytic sites are hosted primarily by the beta subunits. This chain is ATP synthase subunit beta, found in Azorhizobium caulinodans (strain ATCC 43989 / DSM 5975 / JCM 20966 / LMG 6465 / NBRC 14845 / NCIMB 13405 / ORS 571).